The chain runs to 199 residues: N-(5'-phosphoribosyl)anthranilate isomerase (199 aa).

It belongs to the TrpF family.

The enzyme catalyses N-(5-phospho-beta-D-ribosyl)anthranilate = 1-(2-carboxyphenylamino)-1-deoxy-D-ribulose 5-phosphate. Its pathway is amino-acid biosynthesis; L-tryptophan biosynthesis; L-tryptophan from chorismate: step 3/5. The sequence is that of N-(5'-phosphoribosyl)anthranilate isomerase from Campylobacter jejuni subsp. jejuni serotype O:6 (strain 81116 / NCTC 11828).